A 234-amino-acid chain; its full sequence is Sugar fermentation stimulation protein homolog (234 aa).

It belongs to the SfsA family.

The chain is Sugar fermentation stimulation protein homolog from Shewanella sp. (strain MR-7).